The chain runs to 150 residues: Large ribosomal subunit protein bL9 (150 aa).

It belongs to the bacterial ribosomal protein bL9 family.

Its function is as follows. Binds to the 23S rRNA. This chain is Large ribosomal subunit protein bL9, found in Paraburkholderia phymatum (strain DSM 17167 / CIP 108236 / LMG 21445 / STM815) (Burkholderia phymatum).